Reading from the N-terminus, the 186-residue chain is Ras-related protein rapA (186 aa).

Gly12–Ser19 contributes to the GTP binding site. Positions Tyr34–Tyr42 match the Effector region motif. GTP is bound by residues Asp59–Thr63 and Asn118–Asp121. Cys183 is modified (cysteine methyl ester). Residue Cys183 is the site of S-geranylgeranyl cysteine attachment. Residues Ala184–Leu186 constitute a propeptide, removed in mature form.

The protein belongs to the small GTPase superfamily. Ras family. As to quaternary structure, interacts with ralGDS (only when rapA is in its GTP-bound state). Interacts with the Rap guanine nucleotide exchange factor glfB.

Its subcellular location is the cell membrane. The catalysed reaction is GTP + H2O = GDP + phosphate + H(+). Functionally, g protein of the Ras family that positively regulates phagocytosis and negatively regulates macropinocytosis. May be involved in the activation of guanylyl cyclase during the response to hyperosmotic conditions. Overexpressing cells generate alterations in cell shape and contractile responses. Involved in chemotaxis via regulation of the balance of Ras and Rap signaling at the leading edge of chemotaxing cells. The sequence is that of Ras-related protein rapA (rapA) from Dictyostelium discoideum (Social amoeba).